Here is a 159-residue protein sequence, read N- to C-terminus: MASPQPPFGGGSNSNSNTASPSNNLSPTASPLLEGRDSPNLPLTMTASTVLMTLPRDATAALAEAGKFGQEKVVIRFKPVGSAPALRREQVKVSSTERFDTVMTYIRKTLKCRESDSVFLYVNSVFAPALDEVVGNLWRCFKDSTNQLNVSYSMTPSFG.

Positions 1-40 (MASPQPPFGGGSNSNSNTASPSNNLSPTASPLLEGRDSPN) are disordered. Low complexity predominate over residues 13–27 (NSNSNTASPSNNLSP). Gly159 is covalently cross-linked (Glycyl lysine isopeptide (Gly-Lys) (interchain with K-218 in ATG5)).

It belongs to the ATG12 family. As to quaternary structure, forms a conjugate with ATG5. Forms a thioester bond with the 'Cys-116' of ATG10. Interacts with the ATG7 C-terminal 40 amino acids domain. The ATG12-ATG5 conjugate forms a complex with several units of ATG16. The ATG12-ATG5 conjugate also associates with ATG3.

The protein localises to the preautophagosomal structure membrane. Its subcellular location is the cytoplasm. In terms of biological role, ubiquitin-like protein involved in cytoplasm to vacuole transport (Cvt), autophagy vesicles formation, mitophagy, and nucleophagy. Conjugation with ATG5 through a ubiquitin-like conjugating system involving also ATG7 as an E1-like activating enzyme and ATG10 as an E2-like conjugating enzyme, is essential for its function. The ATG12-ATG5 conjugate acts as an E3-like enzyme which is required for lipidation of ATG8 and ATG8 association to the vesicle membranes. ATG12-ATG5 rearranges the ATG3 catalytic center and enhances its E2 activity. Plays a role in sexual development and perithecia formation. The sequence is that of Ubiquitin-like protein ATG12 from Sordaria macrospora (strain ATCC MYA-333 / DSM 997 / K(L3346) / K-hell).